The following is a 1104-amino-acid chain: Valine--tRNA ligase, mitochondrial (1104 aa).

The transit peptide at methionine 1 to methionine 47 directs the protein to the mitochondrion. Serine 73 is modified (phosphoserine). Positions lysine 99 to valine 119 are disordered. Positions proline 190–histidine 200 match the 'HIGH' region motif. Serine 294 and serine 332 each carry phosphoserine. The 'KMSKS' region motif lies at lysine 703–serine 707. Residue lysine 706 participates in ATP binding. Residue serine 707 is modified to Phosphoserine. Phosphothreonine is present on threonine 1003.

This sequence belongs to the class-I aminoacyl-tRNA synthetase family.

It is found in the cytoplasm. The protein resides in the mitochondrion. The catalysed reaction is tRNA(Val) + L-valine + ATP = L-valyl-tRNA(Val) + AMP + diphosphate. This is Valine--tRNA ligase, mitochondrial (VAS1) from Saccharomyces cerevisiae (strain ATCC 204508 / S288c) (Baker's yeast).